Here is a 387-residue protein sequence, read N- to C-terminus: MNLHEYQAKALLQRYGVNVPRSQVAETAQAAVEAARALEGDAWVVKAQVHAGGRGKAGGVKLVRTLDEVQDIAVSLLGKRLVTYQNAPDGQPVEKVLVEATLPIARELYVSMLVDRSLERVVLVASAAGGMEIEEIAKDSPEKILQEVCDPLNGLVDYQARNIAFALGLVGDQVAAFTRLAKGLYRLFKENDLALLEINPLIVTAEGALVALDCKMSVDDNALYRRRELAEQRDWSQDDAKEAEAHNAGLNYIALNGNIGCMVNGAGLAMATMDLIKLHGGAPANFLDVGGGATATTVARAFKIILADPNVKAILVNIFGGIMRCDIIAEGIITAVKEVGIEIPVVVRLEGTNVELGRKMLSESGLSIISAAGLTDAAQQAVAAVKV.

One can recognise an ATP-grasp domain in the interval 9–244 (KALLQRYGVN…WSQDDAKEAE (236 aa)). ATP-binding positions include Lys46, 53–55 (GRG), Glu99, Leu102, and Glu107. Mg(2+) is bound by residues Asn199 and Asp213. Residues Asn264 and 321-323 (GIM) contribute to the substrate site.

The protein belongs to the succinate/malate CoA ligase beta subunit family. Heterotetramer of two alpha and two beta subunits. Mg(2+) serves as cofactor.

The catalysed reaction is succinate + ATP + CoA = succinyl-CoA + ADP + phosphate. It carries out the reaction GTP + succinate + CoA = succinyl-CoA + GDP + phosphate. It participates in carbohydrate metabolism; tricarboxylic acid cycle; succinate from succinyl-CoA (ligase route): step 1/1. In terms of biological role, succinyl-CoA synthetase functions in the citric acid cycle (TCA), coupling the hydrolysis of succinyl-CoA to the synthesis of either ATP or GTP and thus represents the only step of substrate-level phosphorylation in the TCA. The beta subunit provides nucleotide specificity of the enzyme and binds the substrate succinate, while the binding sites for coenzyme A and phosphate are found in the alpha subunit. The protein is Succinate--CoA ligase [ADP-forming] subunit beta of Methylobacillus flagellatus (strain ATCC 51484 / DSM 6875 / VKM B-1610 / KT).